Consider the following 202-residue polypeptide: Protein phosphatase 1 regulatory subunit 1B (202 aa).

Met-1 carries the N-acetylmethionine modification. The interval 1–202 (MDPKDRKKIQ…QRPAHPEPGT (202 aa)) is disordered. Position 34 is a phosphothreonine; by PKA (Thr-34). Residues 41 to 63 (LSEHSSPEEEASPHQRASGEGHH) show a composition bias toward basic and acidic residues. A phosphoserine mark is found at Ser-45 and Ser-46. Thr-75 carries the post-translational modification Phosphothreonine; by CDK5. Residues 89–100 (HLQSISNLGENQ) show a composition bias toward polar residues. Ser-102 carries the phosphoserine modification. Residues 109 to 118 (GELRELGYPR) are compositionally biased toward basic and acidic residues. Positions 119–136 (EEEEEEEEEDEEEEEDSQ) are enriched in acidic residues. Ser-135 is subject to Phosphoserine. Residues 191-202 (EPQRPAHPEPGT) show a composition bias toward basic and acidic residues.

The protein belongs to the protein phosphatase inhibitor 1 family. Post-translationally, dopamine- and cyclic AMP-regulated neuronal phosphoprotein. In terms of processing, phosphorylation of Thr-34 is required for activity.

The protein localises to the cytoplasm. Functionally, inhibitor of protein-phosphatase 1. This chain is Protein phosphatase 1 regulatory subunit 1B (PPP1R1B), found in Bos taurus (Bovine).